A 59-amino-acid polypeptide reads, in one-letter code: Kunitz-type serine protease inhibitor BmKTT-1 (59 aa).

One can recognise a BPTI/Kunitz inhibitor domain in the interval 4 to 54 (CSLPVDTGRGKGWFLRYYYNKNSKTCESFIYGGVGGNKNNFLNIENCCKIC). Disulfide bonds link Cys-4–Cys-54, Cys-29–Cys-50, and Cys-51–Cys-59.

The protein belongs to the venom Kunitz-type family. Scorpion delta-Ktx subfamily. Delta-Ktx 2 sub-subfamily. Expressed by the venom gland.

It is found in the secreted. Functionally, dual-function toxin that completely inhibits trypsin activity at a molar ratio of 1:1 (Ki=136 nM) and that inhibits mKv1.3/KCNA3 potassium channel currents (IC(50)=129.7 nM). This is Kunitz-type serine protease inhibitor BmKTT-1 from Olivierus martensii (Manchurian scorpion).